The chain runs to 134 residues: MGKDTIADIITSIRNADMNRKGTVRIGSTNITESIVKILLREGFIENVRKHRENTQDFLILTLRHRRNKKESYKTIFNLKRISRPGLRIYSNSQRITRILGGIGIVILSTSRGIMTDREARLKRVGGEILCYIW.

Belongs to the universal ribosomal protein uS8 family. In terms of assembly, part of the 30S ribosomal subunit.

The protein resides in the plastid. Its subcellular location is the chloroplast. Functionally, one of the primary rRNA binding proteins, it binds directly to 16S rRNA central domain where it helps coordinate assembly of the platform of the 30S subunit. The polypeptide is Small ribosomal subunit protein uS8c (rps8) (Aethionema grandiflorum (Persian stone-cress)).